Here is a 294-residue protein sequence, read N- to C-terminus: DNA adenine methyltransferase YhdJ (294 aa).

Residues 275–294 are disordered; sequence TGNLSKRSRLSEVDPDLITK. The segment covering 283-294 has biased composition (basic and acidic residues); that stretch reads RLSEVDPDLITK.

Belongs to the N(4)/N(6)-methyltransferase family.

It catalyses the reaction a 2'-deoxyadenosine in DNA + S-adenosyl-L-methionine = an N(6)-methyl-2'-deoxyadenosine in DNA + S-adenosyl-L-homocysteine + H(+). In terms of biological role, a beta subtype methylase, recognizes the double-stranded sequence 5'-ATGCAT-3' and methylates A-5. The sequence is that of DNA adenine methyltransferase YhdJ (yhdJ) from Escherichia coli (strain K12).